The chain runs to 230 residues: Thymidylate kinase (230 aa).

23–30 is a binding site for ATP; it reads GIDGAGKT.

Belongs to the thymidylate kinase family.

It catalyses the reaction dTMP + ATP = dTDP + ADP. Phosphorylation of dTMP to form dTDP in both de novo and salvage pathways of dTTP synthesis. This Ureaplasma parvum serovar 3 (strain ATCC 27815 / 27 / NCTC 11736) protein is Thymidylate kinase.